A 387-amino-acid polypeptide reads, in one-letter code: 3-ketoacyl-CoA thiolase (387 aa).

The active-site Acyl-thioester intermediate is C91. Catalysis depends on proton acceptor residues H343 and C373.

It belongs to the thiolase-like superfamily. Thiolase family. Heterotetramer of two alpha chains (FadB) and two beta chains (FadA).

It localises to the cytoplasm. The catalysed reaction is an acyl-CoA + acetyl-CoA = a 3-oxoacyl-CoA + CoA. It functions in the pathway lipid metabolism; fatty acid beta-oxidation. In terms of biological role, catalyzes the final step of fatty acid oxidation in which acetyl-CoA is released and the CoA ester of a fatty acid two carbons shorter is formed. The protein is 3-ketoacyl-CoA thiolase of Shigella flexneri serotype 5b (strain 8401).